We begin with the raw amino-acid sequence, 56 residues long: Metallothionein (56 aa).

Residues C9, C11, C14, C16, C32, C36, H40, C47, H49, C52, and C54 each coordinate Zn(2+).

Belongs to the metallothionein superfamily. Type 14 family.

Functionally, may play a role in essential metal ion homeostasis (especially zinc homeostasis) and resistance to certain non-essential metal ions. Binds four zinc ions. The protein is Metallothionein (smtA) of Synechococcus elongatus (strain ATCC 33912 / PCC 7942 / FACHB-805) (Anacystis nidulans R2).